Consider the following 332-residue polypeptide: MKLGRAALGLLLLAPSVVQAVEPISLGLALAGVLTGYIYPRLYCLFAECCGQKRSLSREALQKDLDNKLFGQHLAKKIILNAVFGFINNPKPKKPLTLSLHGWTGTGKNFVSKIIAENIYEGGLNSDYVHLFVATLHFPHASNITLYKDQLQLWIRGNVSACARSIFIFDEMDKMHAGLIDAIKPFLDYYDLVDGVSYQKAIFIFLSNAGAERITDVALDFWRSGKQREDIKLKDIEHALSVSVFNNKNSGFWHSSLIDRNLIDYFVPFLPLEYKHLKMCIRVEMQSRGYETNEDIVSRVAEEMTFFPKEERVFSDKGCKTVFTKLDYYYDD.

The first 20 residues, 1 to 20 (MKLGRAALGLLLLAPSVVQA), serve as a signal peptide directing secretion. The interval 91-251 (KPKKPLTLSL…VSVFNNKNSG (161 aa)) is interaction with SNAPIN. Residue 102–109 (GWTGTGKN) coordinates ATP. Residues Asn-143 and Asn-158 are each glycosylated (N-linked (GlcNAc...) asparagine). Positions 251 to 332 (GFWHSSLIDR…FTKLDYYYDD (82 aa)) are interaction with KLC1. Positions 312-332 (RVFSDKGCKTVFTKLDYYYDD) are interaction with SYNE3.

The protein belongs to the ClpA/ClpB family. Torsin subfamily. As to quaternary structure, homohexamer. Interacts with TOR1B; the interaction may be specific of neural tissues. Interacts (ATP-bound) with TOR1AIP1 and TOR1AIP2; the interactions induce ATPase activity. Interacts with KLHL14; preferentially when ATP-free. Interacts with KLC1 (via TPR repeats); the interaction associates TOR1A with the kinesin oligomeric complex. Interacts with COPS4; the interaction associates TOR1A with the CSN complex. Interacts with SNAPIN; the interaction is direct and associates SNAPIN with the CSN complex. Interacts with STON2. Interacts (ATP-bound) with SYNE3 (via KASH domain); the interaction is required for SYNE3 nuclear envelope localization. Interacts with VIM; the interaction associates TOR1A with the cytoskeleton. Interacts with PLEC. Interacts (ATP-bound) with SLC6A3; regulates SLC6A3 transport to the plasma membrane. N-glycosylated.

The protein localises to the endoplasmic reticulum lumen. It is found in the nucleus membrane. Its subcellular location is the cell projection. The protein resides in the growth cone. It localises to the cytoplasmic vesicle membrane. The protein localises to the cytoplasmic vesicle. It is found in the secretory vesicle. Its subcellular location is the synaptic vesicle. The protein resides in the cytoplasm. It localises to the cytoskeleton. The enzyme catalyses ATP + H2O = ADP + phosphate + H(+). Functionally, protein with chaperone functions important for the control of protein folding, processing, stability and localization as well as for the reduction of misfolded protein aggregates. Involved in the regulation of synaptic vesicle recycling, controls STON2 protein stability in collaboration with the COP9 signalosome complex (CSN). In the nucleus, may link the cytoskeleton with the nuclear envelope, this mechanism seems to be crucial for the control of nuclear polarity, cell movement and, specifically in neurons, nuclear envelope integrity. Participates in the cellular trafficking and may regulate the subcellular location of multipass membrane proteins such as the dopamine transporter SLC6A3, leading to the modulation of dopamine neurotransmission. In the endoplasmic reticulum, plays a role in the quality control of protein folding by increasing clearance of misfolded proteins such as SGCE variants or holding them in an intermediate state for proper refolding. May have a redundant function with TOR1B in non-neural tissues. The chain is Torsin-1A (TOR1A) from Macaca fascicularis (Crab-eating macaque).